A 224-amino-acid polypeptide reads, in one-letter code: Flagellar L-ring protein (224 aa).

Residues 1-15 form the signal peptide; that stretch reads MRSLLFSLTALVLAG. The N-palmitoyl cysteine moiety is linked to residue cysteine 16. Cysteine 16 is lipidated: S-diacylglycerol cysteine.

This sequence belongs to the FlgH family. In terms of assembly, the basal body constitutes a major portion of the flagellar organelle and consists of four rings (L,P,S, and M) mounted on a central rod.

It localises to the cell outer membrane. It is found in the bacterial flagellum basal body. In terms of biological role, assembles around the rod to form the L-ring and probably protects the motor/basal body from shearing forces during rotation. The protein is Flagellar L-ring protein of Idiomarina loihiensis (strain ATCC BAA-735 / DSM 15497 / L2-TR).